We begin with the raw amino-acid sequence, 280 residues long: Energy-coupling factor transporter ATP-binding protein EcfA1 (280 aa).

The 236-residue stretch at 6–241 (LRTENISFQY…SHMLQEIGLD (236 aa)) folds into the ABC transporter domain. 40 to 47 (GQNGSGKS) is a binding site for ATP.

This sequence belongs to the ABC transporter superfamily. Energy-coupling factor EcfA family. Forms a stable energy-coupling factor (ECF) transporter complex composed of 2 membrane-embedded substrate-binding proteins (S component), 2 ATP-binding proteins (A component) and 2 transmembrane proteins (T component).

Its subcellular location is the cell membrane. Its function is as follows. ATP-binding (A) component of a common energy-coupling factor (ECF) ABC-transporter complex. Unlike classic ABC transporters this ECF transporter provides the energy necessary to transport a number of different substrates. The sequence is that of Energy-coupling factor transporter ATP-binding protein EcfA1 from Bacillus thuringiensis subsp. konkukian (strain 97-27).